The sequence spans 103 residues: Large ribosomal subunit protein uL24 (103 aa).

Belongs to the universal ribosomal protein uL24 family. As to quaternary structure, part of the 50S ribosomal subunit.

Its function is as follows. One of two assembly initiator proteins, it binds directly to the 5'-end of the 23S rRNA, where it nucleates assembly of the 50S subunit. In terms of biological role, one of the proteins that surrounds the polypeptide exit tunnel on the outside of the subunit. The polypeptide is Large ribosomal subunit protein uL24 (Lacticaseibacillus casei (strain BL23) (Lactobacillus casei)).